The chain runs to 282 residues: NH(3)-dependent NAD(+) synthetase (282 aa).

51–58 lines the ATP pocket; sequence GISGGVDS. Mg(2+) is bound at residue Asp57. Deamido-NAD(+) is bound at residue Arg148. Thr168 contributes to the ATP binding site. A Mg(2+)-binding site is contributed by Glu173. Lys181 and Asp188 together coordinate deamido-NAD(+). Positions 197 and 219 each coordinate ATP. 268–269 lines the deamido-NAD(+) pocket; that stretch reads HK.

Belongs to the NAD synthetase family. Homodimer.

The catalysed reaction is deamido-NAD(+) + NH4(+) + ATP = AMP + diphosphate + NAD(+) + H(+). Its pathway is cofactor biosynthesis; NAD(+) biosynthesis; NAD(+) from deamido-NAD(+) (ammonia route): step 1/1. In terms of biological role, catalyzes the ATP-dependent amidation of deamido-NAD to form NAD. Uses ammonia as a nitrogen source. In Burkholderia ambifaria (strain MC40-6), this protein is NH(3)-dependent NAD(+) synthetase.